A 307-amino-acid chain; its full sequence is F-box protein At2g23160 (307 aa).

The F-box domain maps to 2–49; sequence NSSSPISIDLIAEILSRVPSKSVARFRCVSKPWASMIRRPYFTELFLT.

This is F-box protein At2g23160 from Arabidopsis thaliana (Mouse-ear cress).